A 254-amino-acid polypeptide reads, in one-letter code: Glutathione S-transferase F14 (254 aa).

Positions 4–85 constitute a GST N-terminal domain; the sequence is SKMKLHCGFI…YLAEQYKDVG (82 aa). Glutathione is bound by residues 42-43, 56-57, and 69-70; these read AK, EV, and EP. The GST C-terminal domain maps to 92–231; that stretch reads DPKKRAIMSM…DLMKQRRLPI (140 aa).

This sequence belongs to the GST superfamily. Phi family.

Its subcellular location is the cytoplasm. The protein resides in the cytosol. The enzyme catalyses RX + glutathione = an S-substituted glutathione + a halide anion + H(+). In terms of biological role, may be involved in the conjugation of reduced glutathione to a wide number of exogenous and endogenous hydrophobic electrophiles and have a detoxification role against certain herbicides. In Arabidopsis thaliana (Mouse-ear cress), this protein is Glutathione S-transferase F14.